Consider the following 1197-residue polypeptide: DExH-box ATP-dependent RNA helicase DExH3 (1197 aa).

Residues 309–476 form the Helicase ATP-binding domain; sequence LKAIAANQVV…FGGAPAMHIP (168 aa). 322–329 lines the ATP pocket; sequence GETGCGKT. Residues 423 to 426 carry the DEIH box motif; the sequence is DEIH. One can recognise a Helicase C-terminal domain in the interval 564–738; that stretch reads LIENVLCHIV…SLCLQIKSLG (175 aa).

It belongs to the DExH box helicase family.

The enzyme catalyses ATP + H2O = ADP + phosphate + H(+). In Arabidopsis thaliana (Mouse-ear cress), this protein is DExH-box ATP-dependent RNA helicase DExH3.